The chain runs to 151 residues: Deoxyuridine 5'-triphosphate nucleotidohydrolase (151 aa).

Substrate is bound by residues 70-72, N83, and 87-89; these read RSG and LID.

It belongs to the dUTPase family. It depends on Mg(2+) as a cofactor.

The enzyme catalyses dUTP + H2O = dUMP + diphosphate + H(+). It functions in the pathway pyrimidine metabolism; dUMP biosynthesis; dUMP from dCTP (dUTP route): step 2/2. This enzyme is involved in nucleotide metabolism: it produces dUMP, the immediate precursor of thymidine nucleotides and it decreases the intracellular concentration of dUTP so that uracil cannot be incorporated into DNA. This is Deoxyuridine 5'-triphosphate nucleotidohydrolase from Methylococcus capsulatus (strain ATCC 33009 / NCIMB 11132 / Bath).